A 336-amino-acid polypeptide reads, in one-letter code: 4-hydroxy-3-methylbut-2-enyl diphosphate reductase (336 aa).

Position 37 (Cys37) interacts with [4Fe-4S] cluster. His66 and His99 together coordinate (2E)-4-hydroxy-3-methylbut-2-enyl diphosphate. His66 and His99 together coordinate dimethylallyl diphosphate. Isopentenyl diphosphate-binding residues include His66 and His99. Residue Cys121 coordinates [4Fe-4S] cluster. His149 serves as a coordination point for (2E)-4-hydroxy-3-methylbut-2-enyl diphosphate. His149 contacts dimethylallyl diphosphate. His149 contributes to the isopentenyl diphosphate binding site. Glu151 (proton donor) is an active-site residue. Thr189 serves as a coordination point for (2E)-4-hydroxy-3-methylbut-2-enyl diphosphate. Position 219 (Cys219) interacts with [4Fe-4S] cluster. (2E)-4-hydroxy-3-methylbut-2-enyl diphosphate contacts are provided by Ser247, Ser248, Asn249, and Ser292. 4 residues coordinate dimethylallyl diphosphate: Ser247, Ser248, Asn249, and Ser292. Positions 247, 248, 249, and 292 each coordinate isopentenyl diphosphate.

The protein belongs to the IspH family. Requires [4Fe-4S] cluster as cofactor.

It catalyses the reaction isopentenyl diphosphate + 2 oxidized [2Fe-2S]-[ferredoxin] + H2O = (2E)-4-hydroxy-3-methylbut-2-enyl diphosphate + 2 reduced [2Fe-2S]-[ferredoxin] + 2 H(+). It carries out the reaction dimethylallyl diphosphate + 2 oxidized [2Fe-2S]-[ferredoxin] + H2O = (2E)-4-hydroxy-3-methylbut-2-enyl diphosphate + 2 reduced [2Fe-2S]-[ferredoxin] + 2 H(+). It participates in isoprenoid biosynthesis; dimethylallyl diphosphate biosynthesis; dimethylallyl diphosphate from (2E)-4-hydroxy-3-methylbutenyl diphosphate: step 1/1. The protein operates within isoprenoid biosynthesis; isopentenyl diphosphate biosynthesis via DXP pathway; isopentenyl diphosphate from 1-deoxy-D-xylulose 5-phosphate: step 6/6. In terms of biological role, catalyzes the conversion of 1-hydroxy-2-methyl-2-(E)-butenyl 4-diphosphate (HMBPP) into a mixture of isopentenyl diphosphate (IPP) and dimethylallyl diphosphate (DMAPP). Acts in the terminal step of the DOXP/MEP pathway for isoprenoid precursor biosynthesis. This chain is 4-hydroxy-3-methylbut-2-enyl diphosphate reductase, found in Rhodococcus jostii (strain RHA1).